A 207-amino-acid chain; its full sequence is Charged multivesicular body protein 3 (207 aa).

Positions 174–207 (QVSSAPLETHQQEEVVQEKQEDSELLDRLKALKS) are disordered. A coiled-coil region spans residues 183–207 (HQQEEVVQEKQEDSELLDRLKALKS). Positions 183-207 (HQQEEVVQEKQEDSELLDRLKALKS) are enriched in basic and acidic residues.

The protein belongs to the SNF7 family. In terms of assembly, probable core component of the endosomal sorting required for transport complex III (ESCRT-III).

The protein resides in the endosome membrane. In terms of biological role, probable core component of the endosomal sorting required for transport complex III (ESCRT-III) which is involved in multivesicular bodies (MVBs) formation and sorting of endosomal cargo proteins into MVBs. MVBs contain intraluminal vesicles (ILVs) that are generated by invagination and scission from the limiting membrane of the endosome and are delivered to lysosomes enabling degradation of membrane proteins. In Dictyostelium discoideum (Social amoeba), this protein is Charged multivesicular body protein 3 (chmp3).